The primary structure comprises 218 residues: Adenylate kinase (218 aa).

G10–T15 serves as a coordination point for ATP. The interval S30–V59 is NMP. AMP is bound by residues T31, R36, E57–V59, G86–R89, and Q93. The LID stretch occupies residues G127–D164. ATP is bound by residues R128 and V137–Y138. The AMP site is built by R161 and R172. Q200 provides a ligand contact to ATP.

Belongs to the adenylate kinase family. In terms of assembly, monomer.

The protein localises to the cytoplasm. It carries out the reaction AMP + ATP = 2 ADP. The protein operates within purine metabolism; AMP biosynthesis via salvage pathway; AMP from ADP: step 1/1. In terms of biological role, catalyzes the reversible transfer of the terminal phosphate group between ATP and AMP. Plays an important role in cellular energy homeostasis and in adenine nucleotide metabolism. The protein is Adenylate kinase of Chloroherpeton thalassium (strain ATCC 35110 / GB-78).